A 170-amino-acid polypeptide reads, in one-letter code: Large ribosomal subunit protein uL16 (170 aa).

This sequence belongs to the universal ribosomal protein uL16 family.

This Methanospirillum hungatei JF-1 (strain ATCC 27890 / DSM 864 / NBRC 100397 / JF-1) protein is Large ribosomal subunit protein uL16.